The primary structure comprises 200 residues: Large ribosomal subunit protein uL4 (200 aa).

Positions 43–71 are disordered; it reads RAQKTRAEVSGSGKKPWRQKGTGRARSGD.

Belongs to the universal ribosomal protein uL4 family. Part of the 50S ribosomal subunit.

Functionally, one of the primary rRNA binding proteins, this protein initially binds near the 5'-end of the 23S rRNA. It is important during the early stages of 50S assembly. It makes multiple contacts with different domains of the 23S rRNA in the assembled 50S subunit and ribosome. Its function is as follows. Forms part of the polypeptide exit tunnel. The polypeptide is Large ribosomal subunit protein uL4 (Aggregatibacter actinomycetemcomitans (Actinobacillus actinomycetemcomitans)).